We begin with the raw amino-acid sequence, 99 residues long: Sm-like protein LSM7 (99 aa).

In terms of domain architecture, Sm spans 6 to 86; the sequence is ETVLDLAKFV…VMLVSPTDGT (81 aa).

This sequence belongs to the snRNP Sm proteins family. Component of the heptameric LSM1-LSM7 complex that forms a seven-membered ring structure with a donut shape. The LSM subunits are arranged in the order LSM1, LSM2, LSM3, LSM6, LSM5, LSM7 and LSM4. Component of the heptameric LSM2-LSM8 complex that forms a seven-membered ring structure with a donut shape. The LSM subunits are arranged in the order LSM8, LSM2, LSM3, LSM6, LSM5, LSM7 and LSM4. LSM7 subunit interacts only with its two neighboring subunits, LSM5 and LSM4. As to expression, expressed in roots, leaves, stems, flowers and siliques.

It is found in the cytoplasm. The protein localises to the nucleus. Functionally, component of LSM protein complexes, which are involved in RNA processing. Component of the cytoplasmic LSM1-LSM7 complex which is involved in mRNA degradation by promoting decapping and leading to accurate 5'-3' mRNA decay. The cytoplasmic LSM1-LSM7 complex regulates developmental gene expression by the decapping of specific development-related transcripts. Component of the nuclear LSM2-LSM8 complex which is involved splicing nuclear mRNAs. LSM2-LSM8 binds directly to the U6 small nuclear RNAs (snRNAs) and is essential for accurate splicing of selected development-related mRNAs through the stabilization of the spliceosomal U6 snRNA. Plays a critical role in the regulation of development-related gene expression. The polypeptide is Sm-like protein LSM7 (Arabidopsis thaliana (Mouse-ear cress)).